The sequence spans 373 residues: Bifunctional enzyme IspD/IspF (373 aa).

A 2-C-methyl-D-erythritol 4-phosphate cytidylyltransferase region spans residues 1–212 (MPDITLILLG…PCIEAPSGKT (212 aa)). Positions 213-373 (LTGFGLDIHP…NLTYYNWKQK (161 aa)) are 2-C-methyl-D-erythritol 2,4-cyclodiphosphate synthase. A divalent metal cation contacts are provided by aspartate 219 and histidine 221. 4-CDP-2-C-methyl-D-erythritol 2-phosphate contacts are provided by residues 219-221 (DIH) and 245-246 (HS). Position 253 (histidine 253) interacts with a divalent metal cation. Residues 267 to 269 (DIG), 272 to 276 (YPDTD), 343 to 346 (TTAE), phenylalanine 350, and arginine 353 contribute to the 4-CDP-2-C-methyl-D-erythritol 2-phosphate site.

The protein in the N-terminal section; belongs to the IspD/TarI cytidylyltransferase family. IspD subfamily. In the C-terminal section; belongs to the IspF family. A divalent metal cation serves as cofactor.

The catalysed reaction is 2-C-methyl-D-erythritol 4-phosphate + CTP + H(+) = 4-CDP-2-C-methyl-D-erythritol + diphosphate. It catalyses the reaction 4-CDP-2-C-methyl-D-erythritol 2-phosphate = 2-C-methyl-D-erythritol 2,4-cyclic diphosphate + CMP. It participates in isoprenoid biosynthesis; isopentenyl diphosphate biosynthesis via DXP pathway; isopentenyl diphosphate from 1-deoxy-D-xylulose 5-phosphate: step 2/6. The protein operates within isoprenoid biosynthesis; isopentenyl diphosphate biosynthesis via DXP pathway; isopentenyl diphosphate from 1-deoxy-D-xylulose 5-phosphate: step 4/6. Bifunctional enzyme that catalyzes the formation of 4-diphosphocytidyl-2-C-methyl-D-erythritol from CTP and 2-C-methyl-D-erythritol 4-phosphate (MEP) (IspD), and catalyzes the conversion of 4-diphosphocytidyl-2-C-methyl-D-erythritol 2-phosphate (CDP-ME2P) to 2-C-methyl-D-erythritol 2,4-cyclodiphosphate (ME-CPP) with a corresponding release of cytidine 5-monophosphate (CMP) (IspF). This is Bifunctional enzyme IspD/IspF from Sulfurovum sp. (strain NBC37-1).